Consider the following 715-residue polypeptide: MIATLPDEAYAIVEGRHADPFRYLGPHRENERTVVRAFLPEAASVEAVDEKGGTAALERIHDAGLFAGLLPNGSARYQLRARFGDTIVDLEDPYRFPPILTDFDLYLLGEGSHQRLYDKLGAHLMTLDGVEGVGFVVLAPNARRVSVVGDFNFWDSRRHPMRVRGSGYWELFIPRATAGDHYKFEIVSAQGHLLPLKSDPMAFAAEMRPSTASIVLDPERVPHPRPAPAGISALTSPMSIYEVHLGSWRRKDNNDWLSYRELAEQLPAYVRDLGFTHVEFLPINEHPFDGSWGYQPTGLFAPTSRFGTPEDFAALVDACHAHGLGVLLDWVPGHFPDDPHGLAHFDGTSLYEHANPLQGRHNDWGTLIYNYGRTEVVNFLVSNALFWLERYAVDGLRVDAVASMLYLDYSRPAGGWIPNKYGGRENLEAIDFLRRFNTEVFAKFPNATTAAEESTAWPQVSQPVEFGGLGFGYKWNMGWMHDTLNYISMDPIYRKYHHGQILFGLHYAFSENFILPLSHDEVVHGKRSILGRMPGDHWQRFANLRAYYAFMFAHPGKKLMFMGCEFGQDREWNHDSSLDWHLLEQESHRGVQSVVRDLNNLYRTMPALYELDCDSFGFEWIVTDDGDRNVFAWIRKGNAARARCLVIANFSPNVYYDYQVRVPFPGKWREVFNSDSAHYGGSNVGNIGEVEAVGLVPELSLTIPPLAVIFLTPED.

Asp-399 acts as the Nucleophile in catalysis. Glu-452 (proton donor) is an active-site residue.

Belongs to the glycosyl hydrolase 13 family. GlgB subfamily. In terms of assembly, monomer.

The enzyme catalyses Transfers a segment of a (1-&gt;4)-alpha-D-glucan chain to a primary hydroxy group in a similar glucan chain.. Its pathway is glycan biosynthesis; glycogen biosynthesis. Functionally, catalyzes the formation of the alpha-1,6-glucosidic linkages in glycogen by scission of a 1,4-alpha-linked oligosaccharide from growing alpha-1,4-glucan chains and the subsequent attachment of the oligosaccharide to the alpha-1,6 position. The sequence is that of 1,4-alpha-glucan branching enzyme GlgB from Rhodopseudomonas palustris (strain BisA53).